The chain runs to 593 residues: MGPGLGNGPDEFRARRERDVTALLSQISYLEEEIGLLRRKVAESPRQLRLLEERLAEAEGRAAFLSERNDKLAGTLRDARDQLVTLKEEVDRLGQPPSGYGVFLTRHDDGTVDVFTGGRKLRVSVSPAVEVDVLQHGQEVMLNEAMNVVEACGFERAGDVVMLKELLEPVEGEAPRALVIGHTDEERVVHLAESLTDQPLRSGDSLLLETRSGYVYERIPKSEVEELVLEEVPDIDYGDIGGLSRQIEQIRDAVELPFLHADLFREYELRPPKGILLYGPPGCGKTLIAKAVANSLAKKVSAVKGEGQAKSYFLNIKGPELLNKYVGETERHIRLVFQRAREKAGEGTPVIVFFDEMDSIFRTRGSGVSSDVESTIVPQLLSEIDGVEGLENVIVIGASNREDMIDPAILRPGRLDVKIKIERPDAEAARDIFSKYLTTTLPLHPDDLAEHGNSREATVGGMIQRTVERMYTESEENRFLEVTYANGDKEVLYFKDFNSGAMLQNIVDRAKKMAIKERLETGAGGLRVGHLMQACVDEFKENEDLPNTTNPDDWARISGKKGERIVYIRTLISGKGAESGRAIDTATNTGQYL.

Residues 23 to 95 (LLSQISYLEE…LKEEVDRLGQ (73 aa)) are a coiled coil. Residue 282 to 287 (GCGKTL) coordinates ATP. The tract at residues 592 to 593 (YL) is docks into pockets in the proteasome alpha-ring.

This sequence belongs to the AAA ATPase family. In terms of assembly, homohexamer. Assembles into a hexameric ring structure that caps the 20S proteasome core. Strongly interacts with the prokaryotic ubiquitin-like protein Pup through a hydrophobic interface; the interacting region of ARC lies in its N-terminal coiled-coil domain. There is one Pup binding site per ARC hexamer ring. Upon ATP-binding, the C-terminus of ARC interacts with the alpha-rings of the proteasome core, possibly by binding to the intersubunit pockets.

The protein operates within protein degradation; proteasomal Pup-dependent pathway. Its function is as follows. ATPase which is responsible for recognizing, binding, unfolding and translocation of pupylated proteins into the bacterial 20S proteasome core particle. May be essential for opening the gate of the 20S proteasome via an interaction with its C-terminus, thereby allowing substrate entry and access to the site of proteolysis. Thus, the C-termini of the proteasomal ATPase may function like a 'key in a lock' to induce gate opening and therefore regulate proteolysis. This chain is Proteasome-associated ATPase, found in Geodermatophilus obscurus (strain ATCC 25078 / DSM 43160 / JCM 3152 / CCUG 61914 / KCC A-0152 / KCTC 9177 / NBRC 13315 / NRRL B-3577 / G-20).